Reading from the N-terminus, the 146-residue chain is Large-conductance mechanosensitive channel (146 aa).

Transmembrane regions (helical) follow at residues 15–35 and 81–101; these read VSLA…TSLV and GIFI…FIII.

This sequence belongs to the MscL family. As to quaternary structure, homopentamer.

The protein resides in the cell membrane. In terms of biological role, channel that opens in response to stretch forces in the membrane lipid bilayer. May participate in the regulation of osmotic pressure changes within the cell. The polypeptide is Large-conductance mechanosensitive channel (Clostridium beijerinckii (strain ATCC 51743 / NCIMB 8052) (Clostridium acetobutylicum)).